A 281-amino-acid chain; its full sequence is 2-dehydro-3-deoxyphosphooctonate aldolase (281 aa).

The protein belongs to the KdsA family.

The protein localises to the cytoplasm. It carries out the reaction D-arabinose 5-phosphate + phosphoenolpyruvate + H2O = 3-deoxy-alpha-D-manno-2-octulosonate-8-phosphate + phosphate. It participates in carbohydrate biosynthesis; 3-deoxy-D-manno-octulosonate biosynthesis; 3-deoxy-D-manno-octulosonate from D-ribulose 5-phosphate: step 2/3. Its pathway is bacterial outer membrane biogenesis; lipopolysaccharide biosynthesis. The protein is 2-dehydro-3-deoxyphosphooctonate aldolase of Pseudomonas paraeruginosa (strain DSM 24068 / PA7) (Pseudomonas aeruginosa (strain PA7)).